We begin with the raw amino-acid sequence, 515 residues long: Germ cell-less protein-like 1 (515 aa).

Residues 1-35 (MGSLSSRVLRQPRPALAQQAQGARAGGSARRPDTG) are disordered. Residues 11–29 (QPRPALAQQAQGARAGGSA) show a composition bias toward low complexity. The Nuclear localization signal signature appears at 49–55 (SHKRKRS). The disordered stretch occupies residues 65–85 (DSETDEDEEEGDEQQRLLNTP). S66 carries the phosphoserine modification. A compositionally biased stretch (acidic residues) spans 67–76 (ETDEDEEEGD). A Phosphothreonine modification is found at T68. The Nuclear localization signal motif lies at 85–91 (PRRKKLK). Residues 108–178 (SDIKICALGE…LYRDDVLIKP (71 aa)) form the BTB domain.

Interacts with TMPO-beta, TSG101 and TFDP2. Interacts with EMD.

It is found in the nucleus matrix. Functionally, possible function in spermatogenesis. Enhances the degradation of MDM2 and increases the amount of p53 probably by modulating the nucleocytoplasmic transport. The sequence is that of Germ cell-less protein-like 1 (GMCL1) from Homo sapiens (Human).